The chain runs to 542 residues: Chaperonin GroEL (542 aa).

ATP contacts are provided by residues 29-32 (TLGP), 86-90 (DGTTT), Gly-413, 476-478 (NAA), and Asp-492. Residues 522-542 (PDENGPAAVPDMGMGGMGGMM) form a disordered region.

This sequence belongs to the chaperonin (HSP60) family. As to quaternary structure, forms a cylinder of 14 subunits composed of two heptameric rings stacked back-to-back. Interacts with the co-chaperonin GroES.

Its subcellular location is the cytoplasm. It carries out the reaction ATP + H2O + a folded polypeptide = ADP + phosphate + an unfolded polypeptide.. In terms of biological role, together with its co-chaperonin GroES, plays an essential role in assisting protein folding. The GroEL-GroES system forms a nano-cage that allows encapsulation of the non-native substrate proteins and provides a physical environment optimized to promote and accelerate protein folding. The protein is Chaperonin GroEL of Listeria monocytogenes serotype 4b (strain CLIP80459).